Here is a 68-residue protein sequence, read N- to C-terminus: Elastase inhibitor AFLEI (68 aa).

C5 and C67 are oxidised to a cystine.

It is found in the secreted. Functionally, elastase inhibitor. Inhibitor of A.flavus elastase with a Ki of 40 nM. Inhibitor of A.fumigatus elastase and human leukocyte elastase. Inhibits the fibrinogenase and collagenase activities of A.flavus elastase. Does not inhibit porcine pancreatic elastase, trypsin, chymotrypsin, thrombin or A.acutus AC1-proteinase. This is Elastase inhibitor AFLEI from Aspergillus flavus.